The sequence spans 133 residues: Endoribonuclease YbeY (133 aa).

Residues His105, His109, and His115 each coordinate Zn(2+).

Belongs to the endoribonuclease YbeY family. The cofactor is Zn(2+).

It is found in the cytoplasm. In terms of biological role, single strand-specific metallo-endoribonuclease involved in late-stage 70S ribosome quality control and in maturation of the 3' terminus of the 16S rRNA. The polypeptide is Endoribonuclease YbeY (Lawsonia intracellularis (strain PHE/MN1-00)).